Reading from the N-terminus, the 1477-residue chain is Lysine-specific demethylase rbr-2 (1477 aa).

The tract at residues 1–37 is disordered; that stretch reads MRARRQENSISTPSAPSTSTSPRKKASIGNSRSKNHG. The segment covering 9–21 has biased composition (low complexity); it reads SISTPSAPSTSTS. Positions 56–97 constitute a JmjN domain; it reads APIYYPTEEEFSDPIEYVAKIRHEAEKFGVVKIVPPANFKPP. Positions 121–218 constitute an ARID domain; it reads VKEKHTFIDR…HIEPFNRNLK (98 aa). Residues 222 to 314 form a disordered region; the sequence is MKNDDESDDE…KAEGDDDDDE (93 aa). Residues 246–259 show a composition bias toward basic and acidic residues; it reads MRTEIEVPNDKTTE. 2 stretches are compositionally biased toward basic residues: residues 272 to 283 and 295 to 304; these read GRRRSKNKKASS and NSTRGRKNKK. The segment at 319–371 adopts a PHD-type 1 zinc-finger fold; the sequence is QVFCVACNEGKDEDLLLLCDIDGCNNGRHTYCCDPVLDEVPEGEWRCPKCIES. The region spanning 468-634 is the JmjC domain; sequence QYASHAWNLN…KGRECVESYS (167 aa). 3 residues coordinate Fe cation: H514, D517, and H602. A coiled-coil region spans residues 874–926; sequence IIDKLEKWMEQVEMWRNRAKDAIYREQEYSKEEIEKIIEEGDEYDIKLEEIDE. The PHD-type 2 zinc finger occupies 1203–1257; that stretch reads LEACSCLGFNKSDDSESTLTCIMCDSEFHVRCCEWSPFLEKLPEGCFLCVRCLRG. Positions 1375–1404 are disordered; it reads TAKRKRPSVSHKETSKKSRKRQSQASPSEY. Residues 1411-1466 form a PHD-type 3 zinc finger; sequence FKSCQARACLKPYGDSVNWVMCEAGCKNWFHVICLGFTLREINDMHEYRCSSCLDH.

Belongs to the JARID1 histone demethylase family. Fe(2+) serves as cofactor.

It localises to the nucleus. The catalysed reaction is N(6),N(6),N(6)-trimethyl-L-lysyl(4)-[histone H3] + 3 2-oxoglutarate + 3 O2 = L-lysyl(4)-[histone H3] + 3 formaldehyde + 3 succinate + 3 CO2. In terms of biological role, histone demethylase that specifically demethylates 'Lys-4' of histone H3, thereby playing a central role in histone code. Does not demethylate histone H3 'Lys-9', H3 'Lys-27', H3 'Lys-36', H3 'Lys-79' or H4 'Lys-20'. Demethylates trimethylated and dimethylated but not monomethylated H3 'Lys-4'. Required for normal longevity of the soma in a germline-dependent manner. Implicated in the epigenetic inheritance of lifespan over several generations. Involved in larval development and vulva formation. This chain is Lysine-specific demethylase rbr-2 (rbr-2), found in Caenorhabditis elegans.